The sequence spans 560 residues: Muellerian-inhibiting factor (560 aa).

The first 24 residues, methionine 1–alanine 24, serve as a signal peptide directing secretion. Residues leucine 25–arginine 451 constitute a propeptide that is removed on maturation. A glycan (N-linked (GlcNAc...) asparagine) is linked at asparagine 64. The tract at residues proline 259–alanine 287 is disordered. The N-linked (GlcNAc...) asparagine glycan is linked to asparagine 329. Cystine bridges form between cysteine 462–cysteine 526, cysteine 488–cysteine 557, and cysteine 492–cysteine 559.

This sequence belongs to the TGF-beta family. In terms of assembly, homodimer; disulfide-linked. Preproprotein is proteolytically processed to generate N- and C-terminal cleavage products that homodimerize and associate to form a biologically active non-covalent complex. Binding of the non-covalent complex to AMHR2 induces dissociation of the pro-region from the mature C-terminal dimer. The N-terminal portion of the protein, despite having no intrinsic activity, has the role of amplifying the activity of the C-terminus. As to expression, in ovaries, AMH is detected in granulosa cells of early growing follicles.

The protein resides in the secreted. Its function is as follows. Plays an important role in several reproductive functions. Induces Muellerian duct regression during male fetal sexual differentiation. Also plays a role in Leydig cell differentiation and function. In female acts as a negative regulator of the primordial to primary follicle transition and decreases FSH sensitivity of growing follicles. AMH signals by binding to a specific type-II receptor, AMHR2, that heterodimerizes with type-I receptors (ACVR1 and BMPR1A), and recruiting SMAD proteins that are translocated to the nucleus to regulate target gene expression. In Homo sapiens (Human), this protein is Muellerian-inhibiting factor.